The chain runs to 138 residues: ATP synthase epsilon chain (138 aa).

This sequence belongs to the ATPase epsilon chain family. In terms of assembly, F-type ATPases have 2 components, CF(1) - the catalytic core - and CF(0) - the membrane proton channel. CF(1) has five subunits: alpha(3), beta(3), gamma(1), delta(1), epsilon(1). CF(0) has three main subunits: a, b and c.

It localises to the cell inner membrane. Produces ATP from ADP in the presence of a proton gradient across the membrane. The sequence is that of ATP synthase epsilon chain from Geotalea uraniireducens (strain Rf4) (Geobacter uraniireducens).